We begin with the raw amino-acid sequence, 732 residues long: Prolyl 3-hydroxylase 3 (732 aa).

The N-terminal stretch at 1-19 is a signal peptide; the sequence is MLRLLRLLLLLLLPPPGSP. Residues 15-25 are compositionally biased toward pro residues; it reads PPGSPEPPEPP. The tract at residues 15 to 35 is disordered; it reads PPGSPEPPEPPGLAQLSPGSP. 4 TPR repeats span residues 39 to 72, 152 to 185, 214 to 247, and 312 to 345; these read PDLLYADGLRAYSAGAWAPAVALLREALRSRAAL, REPYNYLQRAYYQLKKLDLAASAAHTFFVANPTH, YWAAYDTGLELLEQREAALALPQLEEALQGSLAH, and LSQLRRLHEAYAQVGNMSQAMENVLSVLLFYPED. N327 and N458 each carry an N-linked (GlcNAc...) asparagine glycan. Positions 557-671 constitute a Fe2OG dioxygenase domain; sequence THLVCRSAIE…RCALALWHTW (115 aa). Positions 580, 582, and 652 each coordinate Fe cation. R662 is an active-site residue. Residues 674-703 adopt a coiled-coil conformation; that stretch reads EHSEQEWTEAKELLQEEEEEEEEEDILSRD. The span at 676-687 shows a compositional bias: basic and acidic residues; that stretch reads SEQEWTEAKELL. Positions 676–732 are disordered; the sequence is SEQEWTEAKELLQEEEEEEEEEDILSRDPSPEPPSHKLQRVQEKAGKPRRVRVREEL. The span at 688-698 shows a compositional bias: acidic residues; the sequence is QEEEEEEEEED. Over residues 722-732 the composition is skewed to basic residues; it reads KPRRVRVREEL. The Prevents secretion from ER motif lies at 729–732; it reads REEL.

This sequence belongs to the leprecan family. As to quaternary structure, identified in a complex with PLOD1 and P3H4. Fe cation serves as cofactor. The cofactor is L-ascorbate. Detected in kidney (at protein level).

The protein localises to the endoplasmic reticulum. The catalysed reaction is L-prolyl-[collagen] + 2-oxoglutarate + O2 = trans-3-hydroxy-L-prolyl-[collagen] + succinate + CO2. Part of a complex composed of PLOD1, P3H3 and P3H4 that catalyzes hydroxylation of lysine residues in collagen alpha chains and is required for normal assembly and cross-linkling of collagen fibrils. Required for normal hydroxylation of lysine residues in type I collagen chains in skin, bone, tendon, aorta and cornea. Required for normal skin stability via its role in hydroxylation of lysine residues in collagen alpha chains and in collagen fibril assembly. Apparently not required for normal prolyl 3-hydroxylation on collagen chains, possibly because it functions redundantly with other prolyl 3-hydroxylases. In Mus musculus (Mouse), this protein is Prolyl 3-hydroxylase 3.